A 673-amino-acid chain; its full sequence is F-box/LRR-repeat protein 17 (673 aa).

Residues Met1–Ala39 form a disordered region. Over residues Ser9–Ala39 the composition is skewed to basic and acidic residues. The 48-residue stretch at Pro291–Leu338 folds into the F-box domain.

It belongs to the FBXL17 family. Part of the SCF (SKP1-CUL1-F-box) E3 ubiquitin-protein ligase complex SCF(FBXL17). Interacts with BTB domain-containing proteins; specifically recognizes and binds a conserved degron of non-consecutive residues present at the interface of BTB dimers of aberrant composition. Expressed in the neuro-ectoderm of embryos.

The protein localises to the cytoplasm. It localises to the nucleus. In terms of biological role, substrate-recognition component of the SCF(FBXL17) E3 ubiquitin ligase complex, a key component of a quality control pathway required to ensure functional dimerization of BTB domain-containing proteins (dimerization quality control, DQC). FBXL17 specifically recognizes and binds a conserved degron of non-consecutive residues present at the interface of BTB dimers of aberrant composition: aberrant BTB dimer are then ubiquitinated by the SCF(FBXL17) complex and degraded by the proteasome. The ability of the SCF(FBXL17) complex to eliminate compromised BTB dimers is required for the differentiation and survival of neural crest and neuronal cells. This is F-box/LRR-repeat protein 17 from Xenopus laevis (African clawed frog).